Consider the following 119-residue polypeptide: Large ribosomal subunit protein bL20 (119 aa).

The protein belongs to the bacterial ribosomal protein bL20 family.

Binds directly to 23S ribosomal RNA and is necessary for the in vitro assembly process of the 50S ribosomal subunit. It is not involved in the protein synthesizing functions of that subunit. This chain is Large ribosomal subunit protein bL20, found in Shewanella sediminis (strain HAW-EB3).